Reading from the N-terminus, the 136-residue chain is Small ribosomal subunit protein uS19 (136 aa).

A disordered region spans residues 114 to 136 (RSRVSHGSAGVGATRSSKFVPLK).

It belongs to the universal ribosomal protein uS19 family.

Protein S19 forms a complex with S13 that binds strongly to the 16S ribosomal RNA. This Methanosarcina acetivorans (strain ATCC 35395 / DSM 2834 / JCM 12185 / C2A) protein is Small ribosomal subunit protein uS19.